The following is a 575-amino-acid chain: Suppressor of tumorigenicity 7 protein-like (575 aa).

Helical transmembrane passes span 36 to 56 (GLAG…LYAL) and 80 to 100 (FYVA…IFEW). A disordered region spans residues 125–147 (GTESSISEPGSPSRNRENETSRQ). The span at 126–137 (TESSISEPGSPS) shows a compositional bias: polar residues.

Belongs to the ST7 family.

It localises to the membrane. This chain is Suppressor of tumorigenicity 7 protein-like (ST7L), found in Homo sapiens (Human).